Reading from the N-terminus, the 325-residue chain is HTH-type transcriptional regulator VqsM (325 aa).

Positions 226–323 constitute an HTH araC/xylS-type domain; it reads QRIELFLDSI…GQSTTEFRNS (98 aa). 2 consecutive DNA-binding regions (H-T-H motif) follow at residues 243 to 264 and 290 to 313; these read VTTA…ADEG and VDRI…RRWT.

In terms of biological role, transcriptional regulator involved in both the repression (at least 99 genes, such as mexR and algU) and in the activation (at least 203 genes, such as mvfR, rsaL, vqsR and rpoS) of regulatory or putative regulatory proteins which are implicated in quorum sensing, virulence and multidrug resistance. The chain is HTH-type transcriptional regulator VqsM (vqsM) from Pseudomonas aeruginosa (strain ATCC 15692 / DSM 22644 / CIP 104116 / JCM 14847 / LMG 12228 / 1C / PRS 101 / PAO1).